The chain runs to 462 residues: Probable peptidoglycan glycosyltransferase FtsW (462 aa).

Positions 1-28 are disordered; the sequence is MREPRHVPQLRASGRRFPQRGRRHRFGK. Residues 1 to 92 lie on the Cytoplasmic side of the membrane; it reads MREPRHVPQL…RSRMLDFDYS (92 aa). The segment covering 13-27 has biased composition (basic residues); sequence SGRRFPQRGRRHRFG. A helical membrane pass occupies residues 93 to 113; the sequence is LLWVSIALLGLGVVMVYSASI. Topologically, residues 114–127 are periplasmic; that stretch reads AMPDSPKYASYHDY. Residues 128–148 traverse the membrane as a helical segment; it reads AFLLRHCVSLVVAFVAAVIAF. Residues 149 to 158 lie on the Cytoplasmic side of the membrane; that stretch reads RVPVSTWDKY. A helical membrane pass occupies residues 159–179; that stretch reads APHLFLIALVGLVIVLIPHIG. Topologically, residues 180–192 are periplasmic; the sequence is KGVNGARRWIPLG. Residues 193 to 215 form a helical membrane-spanning segment; that stretch reads ITNMQPSEIMKLAVTIYAANYTV. Residues 216-223 lie on the Cytoplasmic side of the membrane; sequence RKQEYMQS. Residues 224 to 244 form a helical membrane-spanning segment; it reads FAKGFLPMAFAVGLVGALLLL. Topologically, residues 245 to 247 are periplasmic; that stretch reads EPD. The helical transmembrane segment at 248–268 threads the bilayer; that stretch reads MGAFMVVAAIAMGVLFLGGVN. The Cytoplasmic portion of the chain corresponds to 269 to 270; it reads GK. The chain crosses the membrane as a helical span at residues 271 to 291; sequence LFGGLVATAVGTFTMLVWLSP. Topologically, residues 292–349 are periplasmic; sequence WRRERIFAYLDPWDERYAQGKAYQLTHSLIAFGRGEWFGVGLGGSVEKLNYLPEAHTD. Residues 350–370 form a helical membrane-spanning segment; it reads FILAVIGEELGFVGVLVVILL. Residues 371–398 lie on the Cytoplasmic side of the membrane; the sequence is FYWIVRRSFEIGRQALALDRTFAGLMAK. The helical transmembrane segment at 399-419 threads the bilayer; the sequence is GVGIWFGAQAFINMGVNLGLL. Over 420 to 425 the chain is Periplasmic; the sequence is PTKGLT. The chain crosses the membrane as a helical span at residues 426–446; that stretch reads LPLVSYGGSGILLNCISLAVL. Residues 447–462 are Cytoplasmic-facing; the sequence is LRVDYENRVLMRGGKV.

The protein belongs to the SEDS family. FtsW subfamily.

Its subcellular location is the cell inner membrane. It carries out the reaction [GlcNAc-(1-&gt;4)-Mur2Ac(oyl-L-Ala-gamma-D-Glu-L-Lys-D-Ala-D-Ala)](n)-di-trans,octa-cis-undecaprenyl diphosphate + beta-D-GlcNAc-(1-&gt;4)-Mur2Ac(oyl-L-Ala-gamma-D-Glu-L-Lys-D-Ala-D-Ala)-di-trans,octa-cis-undecaprenyl diphosphate = [GlcNAc-(1-&gt;4)-Mur2Ac(oyl-L-Ala-gamma-D-Glu-L-Lys-D-Ala-D-Ala)](n+1)-di-trans,octa-cis-undecaprenyl diphosphate + di-trans,octa-cis-undecaprenyl diphosphate + H(+). The protein operates within cell wall biogenesis; peptidoglycan biosynthesis. Functionally, peptidoglycan polymerase that is essential for cell division. This is Probable peptidoglycan glycosyltransferase FtsW from Burkholderia thailandensis (strain ATCC 700388 / DSM 13276 / CCUG 48851 / CIP 106301 / E264).